A 518-amino-acid chain; its full sequence is MIPDVSQALAWLEKHPQALKGIQRGLERETLRVNADGTLATTVHPEALGSALTHKWITTDFAEALLEFITPVDGDIQHMLTFMRDLHRYTARKLGDERMWPLSMPCYIAEGQDIELAQYGTSNTGRFKTLYREGLKNRYGALMQTISGVHYNFSLPMAFWQAKCGVTEGEAAKEKISAGYFRLIRNYYRFGWVIPYLFGASPAICSSFLQGKPTTLPFEKTDCGMYYLPYATSLRLSDLGYTNKSQSNLGITFNDLHEYVAGLKRAIKTPSEEYARIGVEKDGKRLQINSNVLQIENELYAPIRPKRVTRSGESPSDALLRGGIEYIEVRSLDINPFSPIGVDEQQVRFLDLFMVWCVLADAPEMSSDELLCTRTNWNRVILEGRKPGLTLGIGCETAQFPLPKVGKDLFRDLKRVAQTLDSIHGGEEYQKVCDELVACFDNPELTFSARILRSMIDEGIGGTGKAFGEAYRNLLREEPLEILQEEEFIAERDASVRRQQEIEAADTEPFAAWLAKHA.

Belongs to the glutamate--cysteine ligase type 1 family. Type 1 subfamily.

The catalysed reaction is L-cysteine + L-glutamate + ATP = gamma-L-glutamyl-L-cysteine + ADP + phosphate + H(+). Its pathway is sulfur metabolism; glutathione biosynthesis; glutathione from L-cysteine and L-glutamate: step 1/2. The polypeptide is Glutamate--cysteine ligase (Salmonella typhi).